A 713-amino-acid chain; its full sequence is Polyribonucleotide nucleotidyltransferase (713 aa).

Mg(2+) contacts are provided by D493 and D499. The region spanning 560 to 619 is the KH domain; that stretch reads PRMITIKINPEKIRDVIGKGGSVIRALTEETGTTIDISDDGVVTIASTNSEGMAEAKKRI. The S1 motif domain occupies 629 to 697; it reads GHVYEGTVLK…EKGRVRLSAK (69 aa).

Belongs to the polyribonucleotide nucleotidyltransferase family. The cofactor is Mg(2+).

It localises to the cytoplasm. The enzyme catalyses RNA(n+1) + phosphate = RNA(n) + a ribonucleoside 5'-diphosphate. Functionally, involved in mRNA degradation. Catalyzes the phosphorolysis of single-stranded polyribonucleotides processively in the 3'- to 5'-direction. The polypeptide is Polyribonucleotide nucleotidyltransferase (Burkholderia mallei (strain NCTC 10247)).